A 175-amino-acid polypeptide reads, in one-letter code: CDP-archaeol synthase (175 aa).

Transmembrane regions (helical) follow at residues 41 to 61 (GLFS…WLSS), 82 to 102 (LIVV…KSFF), 122 to 142 (FVVG…VSNF), and 150 to 170 (VIII…LIGV).

It belongs to the CDP-archaeol synthase family. Mg(2+) serves as cofactor.

It is found in the cell membrane. It carries out the reaction 2,3-bis-O-(geranylgeranyl)-sn-glycerol 1-phosphate + CTP + H(+) = CDP-2,3-bis-O-(geranylgeranyl)-sn-glycerol + diphosphate. Its pathway is membrane lipid metabolism; glycerophospholipid metabolism. Catalyzes the formation of CDP-2,3-bis-(O-geranylgeranyl)-sn-glycerol (CDP-archaeol) from 2,3-bis-(O-geranylgeranyl)-sn-glycerol 1-phosphate (DGGGP) and CTP. This reaction is the third ether-bond-formation step in the biosynthesis of archaeal membrane lipids. This Methanosarcina barkeri (strain Fusaro / DSM 804) protein is CDP-archaeol synthase.